A 427-amino-acid polypeptide reads, in one-letter code: Proline--tRNA ligase (427 aa).

This sequence belongs to the class-II aminoacyl-tRNA synthetase family. ProS type 2 subfamily. As to quaternary structure, homodimer.

It is found in the cytoplasm. It carries out the reaction tRNA(Pro) + L-proline + ATP = L-prolyl-tRNA(Pro) + AMP + diphosphate. Its function is as follows. Catalyzes the attachment of proline to tRNA(Pro) in a two-step reaction: proline is first activated by ATP to form Pro-AMP and then transferred to the acceptor end of tRNA(Pro). This Rickettsia akari (strain Hartford) protein is Proline--tRNA ligase.